Consider the following 476-residue polypeptide: Exodeoxyribonuclease 7 large subunit (476 aa).

This sequence belongs to the XseA family. In terms of assembly, heterooligomer composed of large and small subunits.

Its subcellular location is the cytoplasm. It catalyses the reaction Exonucleolytic cleavage in either 5'- to 3'- or 3'- to 5'-direction to yield nucleoside 5'-phosphates.. Its function is as follows. Bidirectionally degrades single-stranded DNA into large acid-insoluble oligonucleotides, which are then degraded further into small acid-soluble oligonucleotides. The chain is Exodeoxyribonuclease 7 large subunit from Bartonella tribocorum (strain CIP 105476 / IBS 506).